The sequence spans 173 residues: Crossover junction endodeoxyribonuclease RuvC (173 aa).

Active-site residues include Asp8, Glu67, and Asp139. Residues Asp8, Glu67, and Asp139 each contribute to the Mg(2+) site.

This sequence belongs to the RuvC family. In terms of assembly, homodimer which binds Holliday junction (HJ) DNA. The HJ becomes 2-fold symmetrical on binding to RuvC with unstacked arms; it has a different conformation from HJ DNA in complex with RuvA. In the full resolvosome a probable DNA-RuvA(4)-RuvB(12)-RuvC(2) complex forms which resolves the HJ. Mg(2+) serves as cofactor.

Its subcellular location is the cytoplasm. It carries out the reaction Endonucleolytic cleavage at a junction such as a reciprocal single-stranded crossover between two homologous DNA duplexes (Holliday junction).. The RuvA-RuvB-RuvC complex processes Holliday junction (HJ) DNA during genetic recombination and DNA repair. Endonuclease that resolves HJ intermediates. Cleaves cruciform DNA by making single-stranded nicks across the HJ at symmetrical positions within the homologous arms, yielding a 5'-phosphate and a 3'-hydroxyl group; requires a central core of homology in the junction. The consensus cleavage sequence is 5'-(A/T)TT(C/G)-3'. Cleavage occurs on the 3'-side of the TT dinucleotide at the point of strand exchange. HJ branch migration catalyzed by RuvA-RuvB allows RuvC to scan DNA until it finds its consensus sequence, where it cleaves and resolves the cruciform DNA. The protein is Crossover junction endodeoxyribonuclease RuvC of Shewanella loihica (strain ATCC BAA-1088 / PV-4).